A 98-amino-acid polypeptide reads, in one-letter code: Prolactin-releasing peptide (98 aa).

Positions 1–22 (MKAVGAWLLCLLLLGLALQGAA) are cleaved as a signal peptide. At Phe53 the chain carries Phenylalanine amide. Residues 58 to 98 (AAPGDGPRPGPRRELACIPLEGGAEPSRALLGRLTAQLVQE) constitute a propeptide that is removed on maturation.

In terms of tissue distribution, more abundantly expressed in the brainstem than the hypothalamus.

It localises to the secreted. Stimulates prolactin (PRL) release and regulates the expression of prolactin through its receptor GPR10. May stimulate lactotrophs directly to secrete PRL. The protein is Prolactin-releasing peptide (PRLH) of Ovis aries (Sheep).